The chain runs to 255 residues: Leucyl/phenylalanyl-tRNA--protein transferase (255 aa).

The protein belongs to the L/F-transferase family.

The protein resides in the cytoplasm. The enzyme catalyses N-terminal L-lysyl-[protein] + L-leucyl-tRNA(Leu) = N-terminal L-leucyl-L-lysyl-[protein] + tRNA(Leu) + H(+). The catalysed reaction is N-terminal L-arginyl-[protein] + L-leucyl-tRNA(Leu) = N-terminal L-leucyl-L-arginyl-[protein] + tRNA(Leu) + H(+). It catalyses the reaction L-phenylalanyl-tRNA(Phe) + an N-terminal L-alpha-aminoacyl-[protein] = an N-terminal L-phenylalanyl-L-alpha-aminoacyl-[protein] + tRNA(Phe). Its function is as follows. Functions in the N-end rule pathway of protein degradation where it conjugates Leu, Phe and, less efficiently, Met from aminoacyl-tRNAs to the N-termini of proteins containing an N-terminal arginine or lysine. This chain is Leucyl/phenylalanyl-tRNA--protein transferase, found in Polaromonas sp. (strain JS666 / ATCC BAA-500).